We begin with the raw amino-acid sequence, 77 residues long: Defensin-like protein 161 (77 aa).

The N-terminal stretch at 1–27 is a signal peptide; it reads MAKLSCSYLLVFMLVFSAILMVEKVEG. Cystine bridges form between Cys-30–Cys-77, Cys-40–Cys-59, Cys-45–Cys-71, and Cys-49–Cys-73.

The protein belongs to the DEFL family.

The protein resides in the secreted. This chain is Defensin-like protein 161 (LCR27), found in Arabidopsis thaliana (Mouse-ear cress).